Reading from the N-terminus, the 153-residue chain is Phosphatase NudJ (153 aa).

Positions 3–131 (KPHVTVACVV…LVAESIRCYQ (129 aa)) constitute a Nudix hydrolase domain. A Nudix box motif is present at residues 36 to 57 (GHLEADETLVEAAARELWEETG).

The protein belongs to the Nudix hydrolase family. NudJ subfamily. Monomer. It depends on Mg(2+) as a cofactor.

The sequence is that of Phosphatase NudJ (nudJ) from Shigella boydii serotype 4 (strain Sb227).